The following is a 445-amino-acid chain: Phosphoglucosamine mutase (445 aa).

The active-site Phosphoserine intermediate is Ser-102. Positions 102, 241, 243, and 245 each coordinate Mg(2+). Ser-102 is modified (phosphoserine).

It belongs to the phosphohexose mutase family. Requires Mg(2+) as cofactor. Activated by phosphorylation.

The enzyme catalyses alpha-D-glucosamine 1-phosphate = D-glucosamine 6-phosphate. Functionally, catalyzes the conversion of glucosamine-6-phosphate to glucosamine-1-phosphate. The protein is Phosphoglucosamine mutase of Haemophilus influenzae (strain 86-028NP).